The primary structure comprises 400 residues: Telomeric repeat-binding factor 2-interacting protein 1 (400 aa).

Ala-2 carries the post-translational modification N-acetylalanine. Residues Ser-36 and Ser-43 each carry the phosphoserine modification. Residues 78-101 (FISTQYILDCVERNERLELEAYRL) form the BRCT domain. Residues 105–126 (SAADTGSEAKPGALAEGAAEPE) form a disordered region. The span at 112 to 125 (EAKPGALAEGAAEP) shows a compositional bias: low complexity. Lys-114 is covalently cross-linked (Glycyl lysine isopeptide (Lys-Gly) (interchain with G-Cter in SUMO2)). A Myb-like domain is found at 128–188 (QRLAGRIAFT…SLKDRYLKHL (61 aa)). Phosphoserine is present on residues Ser-154 and Ser-156. A Glycyl lysine isopeptide (Lys-Gly) (interchain with G-Cter in SUMO2) cross-link involves residue Lys-194. Disordered regions lie at residues 196-244 (LLGD…EEIQ) and 264-311 (VVVD…SQPE). Ser-203 and Ser-206 each carry phosphoserine. Glycyl lysine isopeptide (Lys-Gly) (interchain with G-Cter in SUMO2) cross-links involve residues Lys-208, Lys-212, and Lys-240. Over residues 280–305 (CDDDPPTPEEDSETQPDEEEEEEEEE) the composition is skewed to acidic residues. A Glycyl lysine isopeptide (Lys-Gly) (interchain with G-Cter in SUMO2) cross-link involves residue Lys-373. Residues 384–400 (KKFGAQNVARRIEFRKK) carry the Nuclear localization signal motif.

It belongs to the RAP1 family. As to quaternary structure, associates with the I-kappa-B-kinase (IKK) core complex, composed of CHUK, IKBKB and IKBKG. Homodimer. Component of the shelterin complex (telosome) composed of TERF1, TERF2, TINF2, TERF2IP ACD and POT1. Interacts with TERF2 (but not TERF1) with its C-terminus. Interacts with SLX4/BTBD12. Interacts with TERF2; the interaction is direct.

The protein resides in the nucleus. It is found in the cytoplasm. The protein localises to the chromosome. Its subcellular location is the telomere. Functionally, acts both as a regulator of telomere function and as a transcription regulator. Involved in the regulation of telomere length and protection as a component of the shelterin complex (telosome). In contrast to other components of the shelterin complex, it is dispensible for telomere capping and does not participate in the protection of telomeres against non-homologous end-joining (NHEJ)-mediated repair. Instead, it is required to negatively regulate telomere recombination and is essential for repressing homology-directed repair (HDR), which can affect telomere length. Does not bind DNA directly: recruited to telomeric double-stranded 5'-TTAGGG-3' repeats via its interaction with TERF2. Independently of its function in telomeres, also acts as a transcription regulator: recruited to extratelomeric 5'-TTAGGG-3' sites via its association with TERF2 or other factors, and regulates gene expression. When cytoplasmic, associates with the I-kappa-B-kinase (IKK) complex and acts as a regulator of the NF-kappa-B signaling by promoting IKK-mediated phosphorylation of RELA/p65, leading to activate expression of NF-kappa-B target genes. This Macaca fascicularis (Crab-eating macaque) protein is Telomeric repeat-binding factor 2-interacting protein 1 (TERF2IP).